The following is a 218-amino-acid chain: N-(5'-phosphoribosyl)anthranilate isomerase (218 aa).

Belongs to the TrpF family.

The catalysed reaction is N-(5-phospho-beta-D-ribosyl)anthranilate = 1-(2-carboxyphenylamino)-1-deoxy-D-ribulose 5-phosphate. The protein operates within amino-acid biosynthesis; L-tryptophan biosynthesis; L-tryptophan from chorismate: step 3/5. The protein is N-(5'-phosphoribosyl)anthranilate isomerase of Stenotrophomonas maltophilia (strain R551-3).